Consider the following 567-residue polypeptide: Cytochrome P450 monooxygenase 79 (567 aa).

A helical transmembrane segment spans residues 7–24; the sequence is ELAILAIVLLVTAVVFYT. Asn223 and Asn279 each carry an N-linked (GlcNAc...) asparagine glycan. Cys475 serves as a coordination point for heme.

The protein belongs to the cytochrome P450 family. It depends on heme as a cofactor.

The protein localises to the membrane. It participates in secondary metabolite biosynthesis. Its function is as follows. Cytochrome P450 monooxygenase that is able to use dehydroabietic acid as a substrate for oxidation. This is Cytochrome P450 monooxygenase 79 from Postia placenta (strain ATCC 44394 / Madison 698-R) (Brown rot fungus).